We begin with the raw amino-acid sequence, 97 residues long: C-C motif chemokine 7 (97 aa).

The N-terminal stretch at 1-23 is a signal peptide; the sequence is MRISATLLCLLLIAAAFSIQVWA. Glutamine 24 is modified (pyrrolidone carboxylic acid). The N-linked (GlcNAc...) asparagine glycan is linked to asparagine 29. 2 disulfides stabilise this stretch: cysteine 33/cysteine 57 and cysteine 34/cysteine 73.

Belongs to the intercrine beta (chemokine CC) family. In terms of assembly, monomer. Interacts with TNFAIP6 (via Link domain).

The protein resides in the secreted. In terms of biological role, chemotactic factor that attracts monocytes and eosinophils, but not neutrophils. Augments monocyte anti-tumor activity. This chain is C-C motif chemokine 7 (Ccl7), found in Mus musculus (Mouse).